The primary structure comprises 258 residues: Tryptophan synthase alpha chain (258 aa).

Catalysis depends on proton acceptor residues Glu52 and Asp63.

Belongs to the TrpA family. As to quaternary structure, tetramer of two alpha and two beta chains.

It catalyses the reaction (1S,2R)-1-C-(indol-3-yl)glycerol 3-phosphate + L-serine = D-glyceraldehyde 3-phosphate + L-tryptophan + H2O. It functions in the pathway amino-acid biosynthesis; L-tryptophan biosynthesis; L-tryptophan from chorismate: step 5/5. In terms of biological role, the alpha subunit is responsible for the aldol cleavage of indoleglycerol phosphate to indole and glyceraldehyde 3-phosphate. The chain is Tryptophan synthase alpha chain from Streptococcus pneumoniae (strain 70585).